The following is a 477-amino-acid chain: Aspartyl/glutamyl-tRNA(Asn/Gln) amidotransferase subunit B (477 aa).

Belongs to the GatB/GatE family. GatB subfamily. As to quaternary structure, heterotrimer of A, B and C subunits.

The catalysed reaction is L-glutamyl-tRNA(Gln) + L-glutamine + ATP + H2O = L-glutaminyl-tRNA(Gln) + L-glutamate + ADP + phosphate + H(+). It catalyses the reaction L-aspartyl-tRNA(Asn) + L-glutamine + ATP + H2O = L-asparaginyl-tRNA(Asn) + L-glutamate + ADP + phosphate + 2 H(+). Its function is as follows. Allows the formation of correctly charged Asn-tRNA(Asn) or Gln-tRNA(Gln) through the transamidation of misacylated Asp-tRNA(Asn) or Glu-tRNA(Gln) in organisms which lack either or both of asparaginyl-tRNA or glutaminyl-tRNA synthetases. The reaction takes place in the presence of glutamine and ATP through an activated phospho-Asp-tRNA(Asn) or phospho-Glu-tRNA(Gln). This Streptococcus sanguinis (strain SK36) protein is Aspartyl/glutamyl-tRNA(Asn/Gln) amidotransferase subunit B.